The following is a 132-amino-acid chain: D-beta-hydroxybutyrate dehydrogenase, mitochondrial (132 aa).

3 to 27 contributes to the NAD(+) binding site; it reads LVTGCDSGFGFSLAKHLHSKGFLVF. Position 17 is an N6-acetyllysine (Lys17). Ser59 contacts substrate. Tyr66 functions as the Proton acceptor in the catalytic mechanism. Residue Lys70 is modified to N6-acetyllysine. Ser77 carries an O-linked (GlcNAc) serine glycan. Ser104 carries the phosphoserine modification.

This sequence belongs to the short-chain dehydrogenases/reductases (SDR) family. Homotetramer.

The protein resides in the mitochondrion inner membrane. The protein localises to the mitochondrion matrix. The catalysed reaction is (R)-3-hydroxybutanoate + NAD(+) = acetoacetate + NADH + H(+). Its activity is regulated as follows. Requires phosphatidylcholine as an allosteric activator for enzymatic activity. This chain is D-beta-hydroxybutyrate dehydrogenase, mitochondrial, found in Mesocricetus auratus (Golden hamster).